Reading from the N-terminus, the 366-residue chain is Class I histocompatibility antigen, Gogo-C*0203 alpha chain (366 aa).

A signal peptide spans 1 to 24 (MRVMAPRTLILLLSGALALTETWA). Residues 25–114 (GSHSMRYFYT…LRGYYNQSED (90 aa)) are alpha-1. The Extracellular portion of the chain corresponds to 25 to 308 (GSHSMRYFYT…EPSSQPTIPI (284 aa)). N-linked (GlcNAc...) asparagine glycosylation occurs at asparagine 110. Residues 115–206 (GSHTLQSMYG…ENGKETLQRA (92 aa)) are alpha-2. 2 disulfides stabilise this stretch: cysteine 125–cysteine 188 and cysteine 227–cysteine 283. The alpha-3 stretch occupies residues 207–298 (EPPKTHVTHH…GLPEPLTLRW (92 aa)). Residues 209-297 (PKTHVTHHPL…EGLPEPLTLR (89 aa)) form the Ig-like C1-type domain. The connecting peptide stretch occupies residues 299–308 (EPSSQPTIPI). A helical membrane pass occupies residues 309-332 (VGIVVGLAVLVVLAVLGAVVTAMM). Topologically, residues 333–366 (CRRKSSGGKGGSCSQAACSNSAQGSDESLITCKA) are cytoplasmic.

It belongs to the MHC class I family. As to quaternary structure, heterodimer of an alpha chain and a beta chain (beta-2-microglobulin).

It localises to the membrane. In terms of biological role, involved in the presentation of foreign antigens to the immune system. This chain is Class I histocompatibility antigen, Gogo-C*0203 alpha chain, found in Gorilla gorilla gorilla (Western lowland gorilla).